Consider the following 99-residue polypeptide: Large ribosomal subunit protein eL21 (99 aa).

This sequence belongs to the eukaryotic ribosomal protein eL21 family.

The chain is Large ribosomal subunit protein eL21 from Methanocella arvoryzae (strain DSM 22066 / NBRC 105507 / MRE50).